A 296-amino-acid polypeptide reads, in one-letter code: Cyclin-dependent kinase 1 (296 aa).

In terms of domain architecture, Protein kinase spans 5–288 (FQKLEKIGEG…AKNGLSHKYF (284 aa)). ATP is bound by residues 11–19 (IGEGTYGVV) and Lys34. Catalysis depends on Asp130, which acts as the Proton acceptor.

This sequence belongs to the protein kinase superfamily. CMGC Ser/Thr protein kinase family. CDC2/CDKX subfamily.

It localises to the nucleus. It catalyses the reaction L-seryl-[protein] + ATP = O-phospho-L-seryl-[protein] + ADP + H(+). The enzyme catalyses L-threonyl-[protein] + ATP = O-phospho-L-threonyl-[protein] + ADP + H(+). In terms of biological role, cyclin-dependent kinase that acts as a master regulator of the mitotic and meiotic cell cycles. The polypeptide is Cyclin-dependent kinase 1 (Encephalitozoon cuniculi (strain GB-M1) (Microsporidian parasite)).